The chain runs to 253 residues: Tryptophan synthase alpha chain (253 aa).

Residues Glu-47 and Asp-58 each act as proton acceptor in the active site.

This sequence belongs to the TrpA family. In terms of assembly, tetramer of two alpha and two beta chains.

The enzyme catalyses (1S,2R)-1-C-(indol-3-yl)glycerol 3-phosphate + L-serine = D-glyceraldehyde 3-phosphate + L-tryptophan + H2O. Its pathway is amino-acid biosynthesis; L-tryptophan biosynthesis; L-tryptophan from chorismate: step 5/5. Functionally, the alpha subunit is responsible for the aldol cleavage of indoleglycerol phosphate to indole and glyceraldehyde 3-phosphate. This Syntrophotalea carbinolica (strain DSM 2380 / NBRC 103641 / GraBd1) (Pelobacter carbinolicus) protein is Tryptophan synthase alpha chain.